The chain runs to 710 residues: Amyloid beta precursor protein binding family B member 1 (710 aa).

Residue serine 135 is modified to Phosphoserine. Disordered regions lie at residues 143–256 (EQGP…SDLP) and 276–300 (GTTQ…ESQL). Residues 145 to 173 (GPDEGEEKAAGEAEEDDEDEEEEEEEEDL) are compositionally biased toward acidic residues. The residue at position 204 (lysine 204) is an N6-acetyllysine. The span at 223–234 (SWATLSQGSPSY) shows a compositional bias: polar residues. One can recognise a WW domain in the interval 253 to 285 (SDLPAGWMRVQDTSGTYYWHIPTGTTQWEPPGR). A compositionally biased stretch (low complexity) spans 287–299 (SPSQGSSPQEESQ). The PID 1 domain maps to 370–509 (FAVRSLGWVE…SKIMSERRNA (140 aa)). A Phosphoserine; by PKC modification is found at serine 459. Residue serine 517 is modified to Phosphoserine. One can recognise a PID 2 domain in the interval 542–699 (KFQVYYLGNV…RRGVQSLWGS (158 aa)). Position 547 is a phosphotyrosine; by ABL1 (tyrosine 547). Phosphoserine; by SGK1 is present on serine 610. Lysine 701 carries the N6-acetyllysine modification.

As to quaternary structure, component of a complex, at least composed of APBB1, RASD1/DEXRAS1 and APP. Interacts (via PID domain 2) with APP (with the intracellular domain of the amyloid-beta precursor protein). Interacts (via PID domain 2) with RASD1/DEXRAS1; impairs the transcription activation activity. Interacts (via PID domain 1) with KAT5/TIP60. Interacts (via the WW domain) with the proline-rich region of APBB1IP. Interacts with TSHZ1 and TSHZ2. Interacts (via the WW domain) with histone H2AX (when phosphorylated on 'Tyr-142') and the proline-rich region of ENAH. Interacts with MAPK8. Interacts (via PID domain 1) with TSHZ3 (via homeobox domain). Interacts with SET. Found in a trimeric complex with HDAC1 and TSHZ3; the interaction between HDAC1 and APBB1 is mediated by TSHZ3. Interacts (via WWW domain) with NEK6. Interacts (via WWW domain) with ABL1. Interacts with RNF157. Interacts with ARF6. In terms of processing, polyubiquitination by RNF157 leads to degradation by the proteasome. Post-translationally, phosphorylation at Ser-610 by SGK1 promotes its localization to the nucleus. Phosphorylated following nuclear translocation. Phosphorylation at Tyr-546 by ABL1 enhances transcriptional activation activity and reduces the affinity for RASD1/DEXRAS1. Acetylation at Lys-204 and Lys-701 by KAT5 promotes its transcription activator activity. Phosphorylated at Ser-459 by PKC upon insulin activation. As to expression, expressed in the brain, retinal lens and muscle cells (at protein level).

It is found in the cell membrane. It localises to the cytoplasm. The protein localises to the nucleus. The protein resides in the cell projection. Its subcellular location is the growth cone. It is found in the nucleus speckle. In terms of biological role, transcription coregulator that can have both coactivator and corepressor functions. Adapter protein that forms a transcriptionally active complex with the gamma-secretase-derived amyloid precursor protein (APP) intracellular domain. Plays a central role in the response to DNA damage by translocating to the nucleus and inducing apoptosis. May act by specifically recognizing and binding histone H2AX phosphorylated on 'Tyr-142' (H2AXY142ph) at double-strand breaks (DSBs), recruiting other pro-apoptosis factors such as MAPK8/JNK1. Required for histone H4 acetylation at double-strand breaks (DSBs). Its ability to specifically bind modified histones and chromatin modifying enzymes such as KAT5/TIP60, probably explains its transcription activation activity. Functions in association with TSHZ3, SET and HDAC factors as a transcriptional repressor, that inhibits the expression of CASP4. Associates with chromatin in a region surrounding the CASP4 transcriptional start site(s). Involved in hippocampal neurite branching and neuromuscular junction formation, as a result plays a role in spatial memory functioning. Plays a role in the maintenance of lens transparency. May play a role in muscle cell strength. Acts as a molecular adapter that functions in neurite outgrowth by activating the RAC1-ARF6 axis upon insulin treatment. In Mus musculus (Mouse), this protein is Amyloid beta precursor protein binding family B member 1.